The primary structure comprises 269 residues: MRCTRAIRQTARTGWLTWLAILAVTAPVTSPAWADDPPATVYRYDSRPPEDVFQNGFTAWGNNDNVLEHLTGRSCQVGSSNSAFVSTSSSRRYTEVYLEHRMQEAVEAERAGRGTGHFIGYIYEVRADNNFYGAASSYFEYVDTYGDNAGRILAGALATYQSEYLAHRRIPPENIRRVTRVYHNGITGETTTTEYPNARYVSQQTRANPNPYTSRRSVASIVGTLVRMAPVTGACMARQAESPEAMAAWSERAGEAMVLVYYESIAYSF.

A signal peptide spans 1–34 (MRCTRAIRQTARTGWLTWLAILAVTAPVTSPAWA).

This sequence belongs to the bacterial exotoxin subunit A family.

This chain is Pertussis toxin subunit 1 homolog (ptxA), found in Bordetella bronchiseptica (strain ATCC BAA-588 / NCTC 13252 / RB50) (Alcaligenes bronchisepticus).